The primary structure comprises 843 residues: INO80 complex subunit D-B (843 aa).

Basic and acidic residues predominate over residues 159–175 (TLNHKQKQQDHSVDTNH). Disordered stretches follow at residues 159-216 (TLNH…PTVR), 221-240 (FKTSSSLQDTHQGSKDSTDN), 503-550 (YHHH…LPQG), 695-726 (SLLHPSEDAFPPSPPSPQPPLTPPSSVGHLTD), and 791-843 (LSTP…TAAP). 3 stretches are compositionally biased toward polar residues: residues 176–187 (LRTSSLPSTLSH), 197–216 (RATQTPINPSSPRAATPTVR), and 221–231 (FKTSSSLQDTH). Residues 503 to 540 (YHHHQQIQRHRPLKKAKPPALSKKHKKKGKRGTQRRPQ) are compositionally biased toward basic residues. The span at 705–717 (PPSPPSPQPPLTP) shows a compositional bias: pro residues. Residues 796–821 (QPSSALSALPQSSQTRSTTTSPTSQT) are compositionally biased toward low complexity.

It belongs to the INO80D family. As to quaternary structure, component of the chromatin-remodeling INO80 complex.

The protein localises to the nucleus. Its function is as follows. Putative regulatory component of the chromatin remodeling INO80 complex which is involved in transcriptional regulation, DNA replication and probably DNA repair. This chain is INO80 complex subunit D-B (ino80db), found in Danio rerio (Zebrafish).